Consider the following 468-residue polypeptide: Acetyl-CoA decarbonylase/synthase complex subunit gamma 1 (468 aa).

Residues 1 to 61 (MKINSPLEAY…YAKKLAELDR (61 aa)) enclose the 4Fe-4S domain. [4Fe-4S] cluster-binding residues include Cys-18, Cys-21, Cys-26, and Cys-43.

As to quaternary structure, heterodimer of delta and gamma chains. The ACDS complex is made up of alpha, epsilon, beta, gamma and delta chains with a probable stoichiometry of (alpha(2)epsilon(2))(4)-beta(8)-(gamma(1)delta(1))(8). Corrinoid serves as cofactor. It depends on [4Fe-4S] cluster as a cofactor.

The catalysed reaction is 5,6,7,8-tetrahydrosarcinapterin + methyl-Co(III)-[corrinoid Fe-S protein] = 5-methyltetrahydrosarcinapterin + Co(I)-[corrinoid Fe-S protein] + H(+). It participates in one-carbon metabolism; methanogenesis from acetate. In terms of biological role, part of a complex that catalyzes the reversible cleavage of acetyl-CoA, allowing growth on acetate as sole source of carbon and energy. In Methanosarcina thermophila, this protein is Acetyl-CoA decarbonylase/synthase complex subunit gamma 1.